Consider the following 420-residue polypeptide: Histidine--tRNA ligase (420 aa).

It belongs to the class-II aminoacyl-tRNA synthetase family. In terms of assembly, homodimer.

It is found in the cytoplasm. It carries out the reaction tRNA(His) + L-histidine + ATP = L-histidyl-tRNA(His) + AMP + diphosphate + H(+). The sequence is that of Histidine--tRNA ligase from Streptomyces avermitilis (strain ATCC 31267 / DSM 46492 / JCM 5070 / NBRC 14893 / NCIMB 12804 / NRRL 8165 / MA-4680).